A 483-amino-acid polypeptide reads, in one-letter code: MLIFEHSRKNRLNYSQAPATRPAKNNIPDNLKRKSAPLLPEVSEMDTVRHYTRLSQKNFSIDTEFYPLGSCTMKYNPRACNALAMLPQFLSRHPLAPEDTGQGFLACMYELQEILKDVTGMSAVSLTSMAGAQGELIGITMIRAYHEARGDTERTEIIIPDAAHGTNPATAVMCGYKVIEIPTDRDGDVDMEALKAAVSPRTAGLMLTNPSTLGVFEKKVAEMSRVVHEAGGLLYYDGANLNAVLGKVKPGDMGFDVIHMNLHKTFSTPHGGGGPGAAPVGVADCLLPYLPIPIVAHEQGVYRWLTEKDRPQSIGRLSAHMGNAGVLLRAYIYVRLLGAEGMFRIAEYATLNANYLLAELRKLGFEIAYPSRRASHEFIVTMKEIKDKTGVTAMHLAKRLLDKGFHAPTVYFPLLVPECLLIEPAETESKETLDRFVVAMKEILDEIDTQPEMVKTAPHNMPLRKIDDVKAARELDLVWNPAG.

Lys264 is modified (N6-(pyridoxal phosphate)lysine).

Belongs to the GcvP family. C-terminal subunit subfamily. In terms of assembly, the glycine cleavage system is composed of four proteins: P, T, L and H. In this organism, the P 'protein' is a heterodimer of two subunits. The cofactor is pyridoxal 5'-phosphate.

It carries out the reaction N(6)-[(R)-lipoyl]-L-lysyl-[glycine-cleavage complex H protein] + glycine + H(+) = N(6)-[(R)-S(8)-aminomethyldihydrolipoyl]-L-lysyl-[glycine-cleavage complex H protein] + CO2. Its function is as follows. The glycine cleavage system catalyzes the degradation of glycine. The P protein binds the alpha-amino group of glycine through its pyridoxal phosphate cofactor; CO(2) is released and the remaining methylamine moiety is then transferred to the lipoamide cofactor of the H protein. This is Probable glycine dehydrogenase (decarboxylating) subunit 2 from Nitrosomonas eutropha (strain DSM 101675 / C91 / Nm57).